The following is a 127-amino-acid chain: Small ribosomal subunit protein uS11 (127 aa).

It belongs to the universal ribosomal protein uS11 family. Part of the 30S ribosomal subunit. Interacts with proteins S7 and S18. Binds to IF-3.

Functionally, located on the platform of the 30S subunit, it bridges several disparate RNA helices of the 16S rRNA. Forms part of the Shine-Dalgarno cleft in the 70S ribosome. This Streptococcus agalactiae serotype Ia (strain ATCC 27591 / A909 / CDC SS700) protein is Small ribosomal subunit protein uS11.